The following is a 319-amino-acid chain: NAP1-binding protein (319 aa).

Over residues 34 to 43 (SALRSRRKQM) the composition is skewed to basic residues. A disordered region spans residues 34 to 74 (SALRSRRKQMRPTGKSVLKRPRKVTDRKTEEKIRTNRRKTP). Basic and acidic residues predominate over residues 56–67 (KVTDRKTEEKIR). Ser-251 and Ser-260 each carry phosphoserine. A disordered region spans residues 278–319 (EMQPLQENISPACPTPPYRSRETEKEDETLSPISVDFSSYLS).

Interacts with NDC1 and MPS2.

The sequence is that of NAP1-binding protein (NBP1) from Saccharomyces cerevisiae (strain ATCC 204508 / S288c) (Baker's yeast).